The chain runs to 182 residues: CASP-like protein 5A1 (182 aa).

The Cytoplasmic segment spans residues 1 to 47; it reads MEMASHPAVHPVALPPPYQAVGPPAPPAVRINDFPGSPGTLMGLALR. A helical transmembrane segment spans residues 48 to 68; the sequence is FAQLGFALTALCIMVSIVGFS. Topologically, residues 69 to 72 are extracellular; sequence SVTA. A helical membrane pass occupies residues 73 to 93; the sequence is FCFLVAAMVLQCIWSLCLGVL. At 94–117 the chain is on the cytoplasmic side; it reads DCYALLTKRSLRNSLILSFFVVGD. A helical membrane pass occupies residues 118–138; the sequence is WITSTMTFAGACAAAGITVLI. Over 139–158 the chain is Extracellular; it reads DNDLNQCGPNHCNRFEAAAA. The helical transmembrane segment at 159–179 threads the bilayer; the sequence is MAFMSWVITTISFFLSFWILV. Residues 180–182 are Cytoplasmic-facing; that stretch reads TCR.

It belongs to the Casparian strip membrane proteins (CASP) family. As to quaternary structure, homodimer and heterodimers.

It localises to the cell membrane. The chain is CASP-like protein 5A1 from Physcomitrium patens (Spreading-leaved earth moss).